The chain runs to 225 residues: Ribonuclease HII (225 aa).

The 191-residue stretch at 35–225 folds into the RNase H type-2 domain; sequence GLVAGVDEVG…SFRPCQISPD (191 aa). Residues Asp-41, Glu-42, and Asp-137 each contribute to the a divalent metal cation site.

The protein belongs to the RNase HII family. The cofactor is Mn(2+). Requires Mg(2+) as cofactor.

It localises to the cytoplasm. It carries out the reaction Endonucleolytic cleavage to 5'-phosphomonoester.. Functionally, endonuclease that specifically degrades the RNA of RNA-DNA hybrids. In Nostoc sp. (strain PCC 7120 / SAG 25.82 / UTEX 2576), this protein is Ribonuclease HII.